The chain runs to 126 residues: Fluoride-specific ion channel FluC 2 (126 aa).

4 consecutive transmembrane segments (helical) span residues 11–31, 43–63, 69–89, and 93–113; these read IFLI…LCEL, VLGS…GFIG, AFGT…VQSF, and FFPA…GVFM. 2 residues coordinate Na(+): glycine 76 and threonine 79.

This sequence belongs to the fluoride channel Fluc/FEX (TC 1.A.43) family.

It localises to the cell membrane. It catalyses the reaction fluoride(in) = fluoride(out). With respect to regulation, na(+) is not transported, but it plays an essential structural role and its presence is essential for fluoride channel function. Functionally, fluoride-specific ion channel. Important for reducing fluoride concentration in the cell, thus reducing its toxicity. This chain is Fluoride-specific ion channel FluC 2, found in Methanosarcina barkeri (strain Fusaro / DSM 804).